The following is a 348-amino-acid chain: Galactose-1-phosphate uridylyltransferase (348 aa).

UDP-alpha-D-glucose is bound at residue 28–31 (RAKR). Zn(2+) is bound by residues Cys-52 and Cys-55. Residues Val-61 and 77-78 (ND) contribute to the UDP-alpha-D-glucose site. His-115 is a Zn(2+) binding site. UDP-alpha-D-glucose contacts are provided by residues Asn-153 and 159–161 (GCS). Residue His-164 coordinates Zn(2+). His-166 functions as the Tele-UMP-histidine intermediate in the catalytic mechanism. Gln-168 is a binding site for UDP-alpha-D-glucose. Glu-182, His-281, His-296, and His-298 together coordinate Fe cation. UDP-alpha-D-glucose contacts are provided by residues 311–312 (KF), 316–317 (YE), and Gln-323.

The protein belongs to the galactose-1-phosphate uridylyltransferase type 1 family. Zn(2+) is required as a cofactor.

It carries out the reaction alpha-D-galactose 1-phosphate + UDP-alpha-D-glucose = alpha-D-glucose 1-phosphate + UDP-alpha-D-galactose. It participates in carbohydrate metabolism; galactose metabolism. The chain is Galactose-1-phosphate uridylyltransferase (galT) from Salmonella typhimurium (strain LT2 / SGSC1412 / ATCC 700720).